The primary structure comprises 485 residues: Glutamyl-tRNA(Gln) amidotransferase subunit A (485 aa).

Active-site charge relay system residues include lysine 79 and serine 154. Serine 178 acts as the Acyl-ester intermediate in catalysis.

The protein belongs to the amidase family. GatA subfamily. Heterotrimer of A, B and C subunits.

The catalysed reaction is L-glutamyl-tRNA(Gln) + L-glutamine + ATP + H2O = L-glutaminyl-tRNA(Gln) + L-glutamate + ADP + phosphate + H(+). Functionally, allows the formation of correctly charged Gln-tRNA(Gln) through the transamidation of misacylated Glu-tRNA(Gln) in organisms which lack glutaminyl-tRNA synthetase. The reaction takes place in the presence of glutamine and ATP through an activated gamma-phospho-Glu-tRNA(Gln). The polypeptide is Glutamyl-tRNA(Gln) amidotransferase subunit A (Clostridium botulinum (strain Langeland / NCTC 10281 / Type F)).